The chain runs to 299 residues: ATP phosphoribosyltransferase (299 aa).

It belongs to the ATP phosphoribosyltransferase family. Long subfamily. In terms of assembly, equilibrium between an active dimeric form, an inactive hexameric form and higher aggregates. Interconversion between the various forms is largely reversible and is influenced by the natural substrates and inhibitors of the enzyme. Requires Mg(2+) as cofactor.

It is found in the cytoplasm. The catalysed reaction is 1-(5-phospho-beta-D-ribosyl)-ATP + diphosphate = 5-phospho-alpha-D-ribose 1-diphosphate + ATP. It functions in the pathway amino-acid biosynthesis; L-histidine biosynthesis; L-histidine from 5-phospho-alpha-D-ribose 1-diphosphate: step 1/9. Feedback inhibited by histidine. Functionally, catalyzes the condensation of ATP and 5-phosphoribose 1-diphosphate to form N'-(5'-phosphoribosyl)-ATP (PR-ATP). Has a crucial role in the pathway because the rate of histidine biosynthesis seems to be controlled primarily by regulation of HisG enzymatic activity. The chain is ATP phosphoribosyltransferase from Salmonella dublin (strain CT_02021853).